A 253-amino-acid polypeptide reads, in one-letter code: MKFNIVSPVALSCLFFLFLTGTLAQNAGSIVTRELFEQMLSFRNNDACPAKGFYTYDAFIAAANSFPGFGTAGDDTARKKEIAAFFGQTSHETNGGSAGTFTGGYCFVKQIEQSDRYYGRGPIQLTHQSNYERAGQGIGVGQELVNNPDLVATDPIISFKTAIWFWMTEQDNKPSCHNVIIGQWTPSPKDTAANRVPGYGVITNIINGQFECGMGPNTAAESRIGFYRRYCGMLNVPTGENLDCNNQKNFAQG.

The N-terminal stretch at 1–24 (MKFNIVSPVALSCLFFLFLTGTLA) is a signal peptide. E92 functions as the Proton donor in the catalytic mechanism. The cysteines at positions 212 and 244 are disulfide-linked.

It belongs to the glycosyl hydrolase 19 family. Chitinase class II subfamily.

The protein localises to the secreted. It localises to the extracellular space. The catalysed reaction is Random endo-hydrolysis of N-acetyl-beta-D-glucosaminide (1-&gt;4)-beta-linkages in chitin and chitodextrins.. Defense against chitin-containing fungal pathogens. In Solanum lycopersicum (Tomato), this protein is Acidic 26 kDa endochitinase (CHI3).